The chain runs to 217 residues: Killer cell lectin-like receptor subfamily B member 1F (217 aa).

The Cytoplasmic portion of the chain corresponds to 1-45; sequence MDTSKVHGNVKPFRCPGYKQASSPSFSPDACRCPHWHHLALKSGC. The LCK-binding motif motif lies at 31-34; sequence CRCP. Residues 46–66 traverse the membrane as a helical; Signal-anchor for type II membrane protein segment; that stretch reads AGLILLLLSLIGLSVLVRFLV. At 67–217 the chain is on the extracellular side; that stretch reads QKPPIEKCSV…WICQKTLIHV (151 aa). Asn81 is a glycosylation site (N-linked (GlcNAc...) asparagine). In terms of domain architecture, C-type lectin spans 101-211; the sequence is HWNKCLFVSQ…CSSDNHWICQ (111 aa). 2 cysteine pairs are disulfide-bonded: Cys122/Cys210 and Cys189/Cys202.

In terms of tissue distribution, highly expressed in dendritic cells. Detectable in natural killer cells.

The protein localises to the membrane. Its function is as follows. Binds CLEC2I/Clr-g leading to activation of natural killer cells or costimulation of IL-2 production and proliferation of T-cells in response to antigen stimulation. May contribute to the formation of the immunological synapse between T-cells and antigen-presenting dendritic cells. The polypeptide is Killer cell lectin-like receptor subfamily B member 1F (Klrb1f) (Mus musculus (Mouse)).